The sequence spans 409 residues: Putative protein disulfide-isomerase DDB_G0275025 (409 aa).

Residues 1 to 21 form the signal peptide; sequence MKLINICIFIFAIICIESTFG. Residues 28 to 140 form the Thioredoxin domain; the sequence is NVINLTKKNF…AKFSLAKLPS (113 aa). C57 and C60 are oxidised to a cystine. The interval 245-273 is disordered; that stretch reads SNNDNNNNNNNNNNEESTKTTTTEKDPAS. The segment covering 247 to 259 has biased composition (low complexity); that stretch reads NDNNNNNNNNNNE. Residues 260-273 are compositionally biased toward basic and acidic residues; it reads ESTKTTTTEKDPAS. The Prevents secretion from ER signature appears at 406 to 409; that stretch reads KDEL.

This sequence belongs to the protein disulfide isomerase family.

The protein localises to the endoplasmic reticulum lumen. It carries out the reaction Catalyzes the rearrangement of -S-S- bonds in proteins.. This is Putative protein disulfide-isomerase DDB_G0275025 from Dictyostelium discoideum (Social amoeba).